A 492-amino-acid polypeptide reads, in one-letter code: Nuclear autoantigenic sperm protein homolog (492 aa).

Low complexity predominate over residues Met1–Ala14. 2 disordered regions span residues Met1–Arg52 and Asp123–Val254. Phosphothreonine occurs at positions 32 and 33. The segment covering Val124–Glu145 has biased composition (acidic residues). Composition is skewed to basic and acidic residues over residues Gly147–Glu159 and Lys170–Ser179. 2 positions are modified to phosphoserine: Ser179 and Ser184. Thr185 carries the phosphothreonine modification. The residue at position 193 (Ser193) is a Phosphoserine. Residues Ser226–Asn238 are compositionally biased toward polar residues. Acidic residues predominate over residues Val244–Gly253. TPR repeat units lie at residues Ala284–Leu317 and Ala326–Glu359. Residues Met377–Gln400 adopt a coiled-coil conformation. The span at Ser418 to Ala459 shows a compositional bias: low complexity. A disordered region spans residues Ser418–Val492. Phosphoserine occurs at positions 478 and 485.

This sequence belongs to the NASP family. As to quaternary structure, interacts with the histone H3-H4 heterodimer; the interaction with H4 is probably indirect and mediated by H3 (His3, His3.3A and His3.3B). Interacts with His2Av; this interaction directly or indirectly destabilizes His2Av.

Its subcellular location is the cytoplasm. The protein resides in the nucleus. The protein localises to the perinuclear region. Its function is as follows. Component of the histone chaperone network. Binds and stabilizes histone H3-H4 not bound to chromatin to maintain a soluble reservoir and modulate degradation by chaperone-mediated autophagy. May also bind and stabilize monomeric H3. Maternal effect gene essential for early embryogenesis. This Drosophila melanogaster (Fruit fly) protein is Nuclear autoantigenic sperm protein homolog.